A 189-amino-acid polypeptide reads, in one-letter code: Putative manganese efflux pump MntP (189 aa).

The next 6 membrane-spanning stretches (helical) occupy residues 3–23, 41–61, 62–82, 103–123, 132–152, and 167–187; these read IVST…AAVS, MIFG…GRVA, ADYV…FLGI, SFIL…SVGV, IVPV…AGVM, and IIGG…HLYG.

It belongs to the MntP (TC 9.B.29) family.

It localises to the cell inner membrane. Its function is as follows. Probably functions as a manganese efflux pump. This Methylobacillus flagellatus (strain ATCC 51484 / DSM 6875 / VKM B-1610 / KT) protein is Putative manganese efflux pump MntP.